A 564-amino-acid chain; its full sequence is ATP-dependent RNA helicase ROK1 (564 aa).

Disordered regions lie at residues 1 to 45 and 62 to 87; these read MDIF…ESQI and EDDREKTTENDSPNKEEKSGNDDGLI. 3 stretches are compositionally biased toward basic and acidic residues: residues 13–23, 33–45, and 62–86; these read VKKESGPKAKA, DENHKEDNNESQI, and EDDREKTTENDSPNKEEKSGNDDGL. Positions 122–150 match the Q motif motif; it reads DLISRFSFDKRLLNNLIENGFTEPTPIQC. In terms of domain architecture, Helicase ATP-binding spans 153-333; sequence IPVALNNRDV…QSIMMDPVRV (181 aa). ATP is bound at residue 166 to 173; that stretch reads GPTGSGKT. The DEAD box signature appears at 280-283; the sequence is DEAD. In terms of domain architecture, Helicase C-terminal spans 344–506; the sequence is NIEQKLIFCG…EVSEWMDKMA (163 aa). Residues 512-564 form a disordered region; the sequence is EKESIKNGKAHKERKQITTVPKMDKAKRRRQQEMIAASKRRKNEELSKKHFSK. The span at 553–564 shows a compositional bias: basic and acidic residues; sequence KNEELSKKHFSK.

This sequence belongs to the DEAD box helicase family. DDX52/ROK1 subfamily. As to quaternary structure, interacts with the U3 snoRNA and is associated with the 90S and 40S pre-ribosomes. This association requires the presence of RRP5. Also interacts with OSH3.

The protein resides in the nucleus. It localises to the nucleolus. It catalyses the reaction ATP + H2O = ADP + phosphate + H(+). ATP-dependent RNA helicase involved in 40S ribosomal subunit biogenesis. Required for the processing and cleavage of 35S pre-rRNA at sites A0, A1, and A2, leading to mature 18S rRNA. May also have a gene-specific regulatory function since it affects nuclear fusion by regulating KAR4 expression and contributes with KEM1 to ISP-1 sensitivity. This is ATP-dependent RNA helicase ROK1 (ROK1) from Saccharomyces cerevisiae (strain ATCC 204508 / S288c) (Baker's yeast).